We begin with the raw amino-acid sequence, 708 residues long: Ribosomal RNA large subunit methyltransferase K/L (708 aa).

The 112-residue stretch at 43-154 (QGYQITLWTR…RGKITIGINF (112 aa)) folds into the THUMP domain.

Belongs to the methyltransferase superfamily. RlmKL family.

The protein localises to the cytoplasm. The catalysed reaction is guanosine(2445) in 23S rRNA + S-adenosyl-L-methionine = N(2)-methylguanosine(2445) in 23S rRNA + S-adenosyl-L-homocysteine + H(+). The enzyme catalyses guanosine(2069) in 23S rRNA + S-adenosyl-L-methionine = N(2)-methylguanosine(2069) in 23S rRNA + S-adenosyl-L-homocysteine + H(+). In terms of biological role, specifically methylates the guanine in position 2445 (m2G2445) and the guanine in position 2069 (m7G2069) of 23S rRNA. This chain is Ribosomal RNA large subunit methyltransferase K/L, found in Shewanella amazonensis (strain ATCC BAA-1098 / SB2B).